A 343-amino-acid chain; its full sequence is Phosphoglycerate mutase-like protein 2 (343 aa).

The transit peptide at 1-35 directs the protein to the chloroplast; sequence MIHQSMTSNLSFYISSVSHLSSPLPSLSRLSLRCC. His-65 (tele-phosphohistidine intermediate) is an active-site residue. Residue Glu-177 is the Proton donor/acceptor of the active site. The segment at 322–343 is disordered; that stretch reads MTNYPGTILTGEDASSDIADQK.

Belongs to the phosphoglycerate mutase family.

The protein resides in the plastid. It localises to the chloroplast. In terms of biological role, may play a role in carbohydrates metabolism. This chain is Phosphoglycerate mutase-like protein 2, found in Arabidopsis thaliana (Mouse-ear cress).